The primary structure comprises 89 residues: Large ribosomal subunit protein bL27 (89 aa).

Residues 1–21 form a disordered region; that stretch reads MAHKKAGGSSRNGRDTEGRRL.

This sequence belongs to the bacterial ribosomal protein bL27 family.

The sequence is that of Large ribosomal subunit protein bL27 from Granulibacter bethesdensis (strain ATCC BAA-1260 / CGDNIH1).